Consider the following 754-residue polypeptide: 5-methyltetrahydropteroyltriglutamate--homocysteine methyltransferase (754 aa).

5-methyltetrahydropteroyltri-L-glutamate is bound by residues 17 to 20 and lysine 110; that span reads RELK. L-homocysteine contacts are provided by residues 421–423 and glutamate 474; that span reads IGS. Residues 421–423 and glutamate 474 each bind L-methionine; that span reads IGS. 5-methyltetrahydropteroyltri-L-glutamate-binding positions include 505–506 and tryptophan 551; that span reads RC. L-homocysteine is bound at residue aspartate 589. Aspartate 589 provides a ligand contact to L-methionine. Residue glutamate 595 participates in 5-methyltetrahydropteroyltri-L-glutamate binding. Zn(2+) is bound by residues histidine 631, cysteine 633, and glutamate 655. Catalysis depends on histidine 684, which acts as the Proton donor. Cysteine 716 contributes to the Zn(2+) binding site.

Belongs to the vitamin-B12 independent methionine synthase family. Zn(2+) serves as cofactor.

The enzyme catalyses 5-methyltetrahydropteroyltri-L-glutamate + L-homocysteine = tetrahydropteroyltri-L-glutamate + L-methionine. The protein operates within amino-acid biosynthesis; L-methionine biosynthesis via de novo pathway; L-methionine from L-homocysteine (MetE route): step 1/1. Functionally, catalyzes the transfer of a methyl group from 5-methyltetrahydrofolate to homocysteine resulting in methionine formation. The polypeptide is 5-methyltetrahydropteroyltriglutamate--homocysteine methyltransferase (Synechococcus sp. (strain JA-2-3B'a(2-13)) (Cyanobacteria bacterium Yellowstone B-Prime)).